A 120-amino-acid chain; its full sequence is MKKLTKTHSHRQQKLASIINEALIEILRRGKMLDSRLFDCPLTITKVIVTTDLKIANCYFLPFNTKLTIDEIMDALNNSKNAIRNFITNKIHMKFSPDIRFHYDHGFDNAIKVAHLLKDL.

Belongs to the RbfA family. In terms of assembly, monomer. Binds 30S ribosomal subunits, but not 50S ribosomal subunits or 70S ribosomes.

The protein resides in the cytoplasm. In terms of biological role, one of several proteins that assist in the late maturation steps of the functional core of the 30S ribosomal subunit. Associates with free 30S ribosomal subunits (but not with 30S subunits that are part of 70S ribosomes or polysomes). Required for efficient processing of 16S rRNA. May interact with the 5'-terminal helix region of 16S rRNA. This Rickettsia rickettsii (strain Iowa) protein is Ribosome-binding factor A.